Consider the following 456-residue polypeptide: Equilibrative nucleoside transporter 2 (456 aa).

Residues 13 to 33 (LVGISFFILGLGTLLPWNFFI) traverse the membrane as a helical segment. N-linked (GlcNAc...) asparagine glycans are attached at residues asparagine 48 and asparagine 57. 5 helical membrane-spanning segments follow: residues 70 to 90 (WVTL…SFLY), 99 to 119 (ILGS…LVKV), 124 to 144 (GPFF…SAVL), 162 to 182 (LFLS…LLSM), and 193 to 213 (LGYF…YLSL). Asparagine 225 carries N-linked (GlcNAc...) asparagine glycosylation. Position 252 is a phosphoserine (serine 252). Transmembrane regions (helical) follow at residues 291–311 (WLTA…FPAI), 324–344 (WSQF…DWLG), 360–380 (LLPL…LCHV), 386–406 (LPIL…FAVS), and 432–452 (ALMT…SFLF).

Belongs to the SLC29A/ENT transporter (TC 2.A.57) family. Glycosylated. As to expression, highly expressed in skeletal muscle. Expressed in liver, lung, placenta, brain, heart, kidney and ovarian tissues. Expressed in testis at the blood-brain-barrier.

It is found in the apical cell membrane. The protein resides in the basolateral cell membrane. The enzyme catalyses inosine(in) = inosine(out). It catalyses the reaction adenosine(in) = adenosine(out). The catalysed reaction is uridine(out) = uridine(in). It carries out the reaction thymidine(in) = thymidine(out). The enzyme catalyses hypoxanthine(out) = hypoxanthine(in). It catalyses the reaction adenine(out) = adenine(in). The catalysed reaction is cytidine(in) = cytidine(out). It carries out the reaction thymine(out) = thymine(in). The enzyme catalyses uracil(in) = uracil(out). It catalyses the reaction guanine(out) = guanine(in). The catalysed reaction is guanosine(in) = guanosine(out). Its function is as follows. Bidirectional uniporter involved in the facilitative transport of nucleosides and nucleobases, and contributes to maintaining their cellular homeostasis. Functions as a Na(+)-independent, passive transporter. Involved in the transport of nucleosides such as inosine, adenosine, uridine, thymidine, cytidine and guanosine. Also able to transport purine nucleobases (hypoxanthine, adenine, guanine) and pyrimidine nucleobases (thymine, uracil). Involved in nucleoside transport at basolateral membrane of kidney cells, allowing liver absorption of nucleoside metabolites. Mediates apical nucleoside uptake into Sertoli cells, thereby regulating the transport of nucleosides in testis across the blood-testis-barrier. Mediates both the influx and efflux of hypoxanthine in skeletal muscle microvascular endothelial cells to control the amount of intracellular hypoxanthine available for xanthine oxidase-mediated ROS production. In terms of biological role, non functional nucleoside transporter protein for adenosine or thymidine transport. Does not express on cell membrane. In Homo sapiens (Human), this protein is Equilibrative nucleoside transporter 2.